A 303-amino-acid polypeptide reads, in one-letter code: Eukaryotic translation initiation factor 3 subunit G (303 aa).

A disordered region spans residues 1 to 38 (MATQTKHDWADDEDLEETTTTTAPTTDLPPPQKIQNKD). The RRM domain occupies 223–301 (ATLRVTNVSE…LILRVEFAKK (79 aa)).

The protein belongs to the eIF-3 subunit G family. As to quaternary structure, component of the eukaryotic translation initiation factor 3 (eIF-3) complex.

It localises to the cytoplasm. In terms of biological role, RNA-binding component of the eukaryotic translation initiation factor 3 (eIF-3) complex, which is involved in protein synthesis of a specialized repertoire of mRNAs and, together with other initiation factors, stimulates binding of mRNA and methionyl-tRNAi to the 40S ribosome. The eIF-3 complex specifically targets and initiates translation of a subset of mRNAs involved in cell proliferation. This subunit can bind 18S rRNA. The protein is Eukaryotic translation initiation factor 3 subunit G of Chaetomium globosum (strain ATCC 6205 / CBS 148.51 / DSM 1962 / NBRC 6347 / NRRL 1970) (Soil fungus).